Reading from the N-terminus, the 479-residue chain is Glutamyl-tRNA(Gln) amidotransferase subunit A (479 aa).

Catalysis depends on charge relay system residues lysine 71 and serine 146. Catalysis depends on serine 170, which acts as the Acyl-ester intermediate.

Belongs to the amidase family. GatA subfamily. In terms of assembly, heterotrimer of A, B and C subunits.

The catalysed reaction is L-glutamyl-tRNA(Gln) + L-glutamine + ATP + H2O = L-glutaminyl-tRNA(Gln) + L-glutamate + ADP + phosphate + H(+). Functionally, allows the formation of correctly charged Gln-tRNA(Gln) through the transamidation of misacylated Glu-tRNA(Gln) in organisms which lack glutaminyl-tRNA synthetase. The reaction takes place in the presence of glutamine and ATP through an activated gamma-phospho-Glu-tRNA(Gln). This Lactobacillus gasseri (strain ATCC 33323 / DSM 20243 / BCRC 14619 / CIP 102991 / JCM 1131 / KCTC 3163 / NCIMB 11718 / NCTC 13722 / AM63) protein is Glutamyl-tRNA(Gln) amidotransferase subunit A.